Consider the following 77-residue polypeptide: MARVCQVTGKAPMVGNNVSHANNKTKRRFLPNLQNRRFWVESENRWVSLRVSNAGLRLIDKKGIDEVLVDLRARGEV.

Belongs to the bacterial ribosomal protein bL28 family.

In Ralstonia pickettii (strain 12J), this protein is Large ribosomal subunit protein bL28.